The chain runs to 723 residues: Polyribonucleotide nucleotidyltransferase (723 aa).

2 residues coordinate Mg(2+): D488 and D494. The region spanning 555–614 (PKIITLNIKPEKIKDVIGPGGKQINAIIEETGVKIDIEQDGTVYIASQDQAMNRKAIAII) is the KH domain. The region spanning 624–692 (GEVYTGKVRR…HQGRVNLSRK (69 aa)) is the S1 motif domain. A disordered region spans residues 692–723 (KALLEKKEQPEGDKKPQAEKKFYPKTKKPESK). A compositionally biased stretch (basic and acidic residues) spans 693-723 (ALLEKKEQPEGDKKPQAEKKFYPKTKKPESK).

It belongs to the polyribonucleotide nucleotidyltransferase family. Requires Mg(2+) as cofactor.

It localises to the cytoplasm. The catalysed reaction is RNA(n+1) + phosphate = RNA(n) + a ribonucleoside 5'-diphosphate. Involved in mRNA degradation. Catalyzes the phosphorolysis of single-stranded polyribonucleotides processively in the 3'- to 5'-direction. This is Polyribonucleotide nucleotidyltransferase from Listeria welshimeri serovar 6b (strain ATCC 35897 / DSM 20650 / CCUG 15529 / CIP 8149 / NCTC 11857 / SLCC 5334 / V8).